Consider the following 551-residue polypeptide: Gliomedin (551 aa).

The Cytoplasmic portion of the chain corresponds to 1–17 (MARGAEGGRGDAGWGLR). A helical; Signal-anchor for type II membrane protein transmembrane segment spans residues 18–39 (GALAAVALLSALNAAGTVFALC). The Extracellular portion of the chain corresponds to 40–551 (QWRGLSSALR…VQFLSTTLNQ (512 aa)). Residues 72–107 (LSRAPRGASAPPQDPASSARNKRSHSGEPAPHIRAE) are disordered. Over residues 79–90 (ASAPPQDPASSA) the composition is skewed to low complexity. N130 carries an N-linked (GlcNAc...) asparagine glycan. Collagen-like domains lie at 137 to 195 (LTGP…RGEK) and 196 to 222 (GDHG…KGDV). The interval 139–282 (GPSGPPGPPG…GETCAIPNDD (144 aa)) is disordered. Basic and acidic residues-rich tracts occupy residues 191-200 (ERGEKGDHGE) and 213-222 (KGEKGDKGDV). Residues 237–253 (PPGPPGPPGPPGPPGPP) show a composition bias toward pro residues. The region spanning 299–546 (QAESMITSIG…LMLYPVQFLS (248 aa)) is the Olfactomedin-like domain. 4 N-linked (GlcNAc...) asparagine glycosylation sites follow: N329, N357, N378, and N464.

As to quaternary structure, homotrimer (via collagen-like domains). Interacts with NRCAM and NFASC/neurofascin. Interaction with glial NRCAM enhances interaction with axonal NFASC. Interacts with MYOC. Post-translationally, N-glycosylated. Proteolytic processing by a furin-like protease causes shedding of the ectodomain. Further cleavage by BMP1 releases the olfactomedin-like domain. Specifically expressed in spinal cord, brain, placenta and sciatic nerve. More abundant in peripheral than central nervous system.

The protein localises to the cell membrane. Its subcellular location is the cell projection. It localises to the axon. The protein resides in the secreted. It is found in the extracellular space. The protein localises to the extracellular matrix. In terms of biological role, ligand for NRCAM and NFASC/neurofascin that plays a role in the formation and maintenance of the nodes of Ranvier on myelinated axons. Mediates interaction between Schwann cell microvilli and axons via its interactions with NRCAM and NFASC. Nodes of Ranvier contain clustered sodium channels that are crucial for the saltatory propagation of action potentials along myelinated axons. During development, nodes of Ranvier are formed by the fusion of two heminodes. Required for normal clustering of sodium channels at heminodes; not required for the formation of mature nodes with normal sodium channel clusters. Required, together with NRCAM, for maintaining NFASC and sodium channel clusters at mature nodes of Ranvier. The chain is Gliomedin (GLDN) from Homo sapiens (Human).